We begin with the raw amino-acid sequence, 473 residues long: T-box transcription factor TBX6L (473 aa).

A DNA-binding region (T-box) is located at residues 43–217 (LWDKFSSIGT…NNPFAKGFRD (175 aa)). Positions 342 to 361 (RLNPQETHHNSRPKIQLQPP) are disordered.

In terms of tissue distribution, exclusively expressed by ventral mesendoderm.

It localises to the nucleus. Probable transcriptional regulator involved in developmental processes. The protein is T-box transcription factor TBX6L (tbx6l) of Danio rerio (Zebrafish).